We begin with the raw amino-acid sequence, 369 residues long: 3-dehydroquinate synthase (369 aa).

Residues 72–77 (SGEKEK), 130–131 (TT), Lys142, and Lys151 each bind NAD(+). 3 residues coordinate Zn(2+): Glu184, His247, and His264.

Belongs to the sugar phosphate cyclases superfamily. Dehydroquinate synthase family. Co(2+) is required as a cofactor. Requires Zn(2+) as cofactor. NAD(+) serves as cofactor.

Its subcellular location is the cytoplasm. It carries out the reaction 7-phospho-2-dehydro-3-deoxy-D-arabino-heptonate = 3-dehydroquinate + phosphate. The protein operates within metabolic intermediate biosynthesis; chorismate biosynthesis; chorismate from D-erythrose 4-phosphate and phosphoenolpyruvate: step 2/7. Functionally, catalyzes the conversion of 3-deoxy-D-arabino-heptulosonate 7-phosphate (DAHP) to dehydroquinate (DHQ). The polypeptide is 3-dehydroquinate synthase (Bacillus cytotoxicus (strain DSM 22905 / CIP 110041 / 391-98 / NVH 391-98)).